Here is a 164-residue protein sequence, read N- to C-terminus: uncharacterized protein (164 aa).

This is an uncharacterized protein from Saccharomyces cerevisiae (strain ATCC 204508 / S288c) (Baker's yeast).